Consider the following 716-residue polypeptide: Polyribonucleotide nucleotidyltransferase (716 aa).

Mg(2+) is bound by residues Asp-490 and Asp-496. A KH domain is found at 556–615; that stretch reads PKIETLTIPTDKIREVIGSGGKVIREIVETSGAKVDINDDGVIKIASNDQAAIKKAYDMI. An S1 motif domain is found at 625 to 693; it reads GQIYTGKVVK…ERGKVRLGMK (69 aa). Residues 695-716 form a disordered region; that stretch reads VDQETGQEIQPEKKEKEEAGEA. The span at 704–716 shows a compositional bias: basic and acidic residues; the sequence is QPEKKEKEEAGEA.

The protein belongs to the polyribonucleotide nucleotidyltransferase family. Requires Mg(2+) as cofactor.

It is found in the cytoplasm. The enzyme catalyses RNA(n+1) + phosphate = RNA(n) + a ribonucleoside 5'-diphosphate. Its function is as follows. Involved in mRNA degradation. Catalyzes the phosphorolysis of single-stranded polyribonucleotides processively in the 3'- to 5'-direction. The polypeptide is Polyribonucleotide nucleotidyltransferase (Cereibacter sphaeroides (strain ATCC 17029 / ATH 2.4.9) (Rhodobacter sphaeroides)).